The primary structure comprises 294 residues: Ethanolamine ammonia-lyase small subunit (294 aa).

The adenosylcob(III)alamin site is built by V207 and E228.

The protein belongs to the EutC family. The basic unit is a heterodimer which dimerizes to form tetramers. The heterotetramers trimerize; 6 large subunits form a core ring with 6 small subunits projecting outwards. Requires adenosylcob(III)alamin as cofactor.

The protein localises to the bacterial microcompartment. The enzyme catalyses ethanolamine = acetaldehyde + NH4(+). It participates in amine and polyamine degradation; ethanolamine degradation. Catalyzes the deamination of various vicinal amino-alcohols to oxo compounds. Allows this organism to utilize ethanolamine as the sole source of nitrogen and carbon in the presence of external vitamin B12. In Clostridium tetani (strain Massachusetts / E88), this protein is Ethanolamine ammonia-lyase small subunit.